Consider the following 308-residue polypeptide: Putative mitochondrial transporter UCP3 (308 aa).

Over 1–10 (MVGLQPSEVP) the chain is Mitochondrial intermembrane. Residues 11–32 (PTTVVKFLGAGTAACFADLLTF) traverse the membrane as a helical segment. 3 Solcar repeats span residues 11–102 (PTTV…VKQF), 111–202 (SSVA…IKEK), and 211–296 (DNFP…LKRA). The Mitochondrial matrix segment spans residues 33-73 (PLDTAKVRLQIQGENPGVQSVQYRGVLGTILTMVRTEGPRS). The helical transmembrane segment at 74–96 (PYSGLVAGLHRQMSFASIRIGLY) threads the bilayer. At 97–116 (DSVKQFYTPKGTDHSSVAIR) the chain is on the mitochondrial intermembrane side. The chain crosses the membrane as a helical span at residues 117-133 (ILAGCTTGAMAVTCAQP). At 134-179 (TDVVKVRFQAMIRLGTGGERKYRGTMDAYRTIAREEGVRGLWKGTW) the chain is on the mitochondrial matrix side. Residues 180–196 (PNITRNAIVNCAEMVTY) traverse the membrane as a helical segment. Residues 197–213 (DIIKEKLLDSHLFTDNF) lie on the Mitochondrial intermembrane side of the membrane. Residues 214 to 233 (PCHFVSAFGAGFCATVVASP) form a helical membrane-spanning segment. The Mitochondrial matrix segment spans residues 234 to 267 (VDVVKTRYMNAPPGRYRSPLHCMLRMVAQEGPTA). A helical membrane pass occupies residues 268–290 (FYKGFMPSFLRLGSWNVMMFVTY). The purine nucleotide binding stretch occupies residues 275–297 (SFLRLGSWNVMMFVTYEQLKRAL). The Mitochondrial intermembrane segment spans residues 291-308 (EQLKRALMKVQVLRESPF).

This sequence belongs to the mitochondrial carrier (TC 2.A.29) family. In terms of assembly, interacts with HAX1; the interaction is direct and calcium-dependent.

It is found in the mitochondrion inner membrane. Its function is as follows. Putative transmembrane transporter that plays a role in mitochondrial metabolism via an as yet unclear mechanism. Originally, this mitochondrial protein was thought to act as a proton transmembrane transporter from the mitochondrial intermembrane space into the matrix, causing proton leaks through the inner mitochondrial membrane, thereby uncoupling mitochondrial membrane potential generation from ATP synthesis. However, this function is controversial and uncoupling may not be the function, or at least not the main function, but rather a consequence of more conventional metabolite transporter activity. The chain is Putative mitochondrial transporter UCP3 from Rattus norvegicus (Rat).